Consider the following 1307-residue polypeptide: Histone-lysine N-methyltransferase SETDB1 (1307 aa).

Positions 30–65 form a coiled coil; the sequence is VEELGISMEELRQYIDEELEKMDCIQQRKKQLAELE. 2 positions are modified to phosphoserine: S112 and S117. At T120 the chain carries Phosphothreonine. Residues 127–148 are disordered; sequence DEDDDVLSIDSGDAGSRTPKDQ. K182 participates in a covalent cross-link: Glycyl lysine isopeptide (Lys-Gly) (interchain with G-Cter in SUMO2); alternate. K182 participates in a covalent cross-link: Glycyl lysine isopeptide (Lys-Gly) (interchain with G-Cter in ubiquitin); alternate. Tudor domains are found at residues 257–320 and 347–403; these read KLFV…LKKT and LLKS…SMKT. 3 disordered regions span residues 404–424, 444–512, and 531–570; these read SSAS…PNMG, IQFK…TLSE, and SVTS…AFHG. Residues 454–467 show a composition bias toward pro residues; sequence PIAPPAPLPIPPLS. Positions 476 to 494 are enriched in polar residues; that stretch reads ESQLAQSRKQVAKKSTSFR. Residues 495–512 show a composition bias toward low complexity; that stretch reads PGSVGSGHSSPTSSTLSE. Over residues 539–565 the composition is skewed to pro residues; that stretch reads AAPPVPPVPPGPPTPPGPPAPPGPLAP. The MBD domain maps to 611–682; sequence YRGKNPLLVP…EMFCLDPYVL (72 aa). One can recognise a Pre-SET domain in the interval 744–817; it reads VGCDCKDGCR…MCTNRLVQHG (74 aa). Zn(2+) is bound by residues C746, C748, C752, C758, C760, C798, C802, C804, and C809. Positions 820–1282 constitute an SET domain; it reads VRLQLFKTQN…AGTELTWDYN (463 aa). Residues 830-832, D868, and Y870 contribute to the S-adenosyl-L-methionine site; that span reads KGW. A Glycyl lysine isopeptide (Lys-Gly) (interchain with G-Cter in ubiquitin) cross-link involves residue K884. The interval 885–1174 is disordered; the sequence is EGYESDVPTS…KNLSGPTKRQ (290 aa). Residues 913–924 show a composition bias toward acidic residues; sequence EDPEESNDDSSD. A compositionally biased stretch (basic and acidic residues) spans 950 to 966; that stretch reads GQKENELSEMTSKDSRP. Residue S1042 is modified to Phosphoserine. Over residues 1048–1066 the composition is skewed to basic and acidic residues; the sequence is FKDEGDNKQPKKEDPENRN. A Glycyl lysine isopeptide (Lys-Gly) (interchain with G-Cter in SUMO2); alternate cross-link involves residue K1049. A Glycyl lysine isopeptide (Lys-Gly) (interchain with G-Cter in SUMO1); alternate cross-link involves residue K1049. Residues K1055 and K1085 each participate in a glycyl lysine isopeptide (Lys-Gly) (interchain with G-Cter in SUMO2) cross-link. Positions 1097-1112 are enriched in polar residues; that stretch reads SVLQSQRVVTSTQSNP. The segment covering 1116–1131 has biased composition (low complexity); that stretch reads LTLSSSTESEGESGTS. The span at 1137–1156 shows a compositional bias: polar residues; that stretch reads GHTSATAVDSDDIQTISSGS. K1165 participates in a covalent cross-link: Glycyl lysine isopeptide (Lys-Gly) (interchain with G-Cter in SUMO2). N6,N6,N6-trimethyllysine; alternate is present on residues K1186 and K1194. An N6,N6-dimethyllysine; alternate mark is found at K1186 and K1194. S-adenosyl-L-methionine is bound by residues R1236 and 1239 to 1240; that span reads NH. C1242, C1295, C1297, and C1302 together coordinate Zn(2+). In terms of domain architecture, Post-SET spans 1291–1307; it reads KELLCCCGAIECRGRLL.

Belongs to the class V-like SAM-binding methyltransferase superfamily. Histone-lysine methyltransferase family. Suvar3-9 subfamily. As to quaternary structure, part of a complex containing at least CDYL, REST, WIZ, SETDB1, EHMT1 and EHMT2. Forms a complex with ATRX, TRIM28 and ZNF274. Probably part of a corepressor complex containing ZNF304, TRIM28, SETDB1 and DNMT1. Interacts with TRIM28/TIF1B. Interacts with ATF7IP and ATF7IP2; the interaction with ATF7IP is required to stimulate histone methyltransferase activity and facilitate the conversion of dimethylated to trimethylated H3 'Lys-9'. Interacts with MBD1; interaction is abolished when MBD1 is sumoylated. Interacts with CBX1 and CBX5. Interacts with DNMT3A and DNMT3B. Interacts with SUMO2. Interacts with MPHOSPH8. Interacts with ERG. Interacts with HDAC1, HDAC2, SIN3A, SIN3B. Interacts with ATRX. Interacts with RESF1. Interacts with ZNF638. Interacts with TASOR. Interacts with ZNF263; recruited to the SIX3 promoter along with other proteins involved in chromatin modification and transcriptional corepression where it contributes to transcriptional repression. Interacts with PHF13; the interaction probably enhances SETDB1 chromatin-associated levels and activity. Interacts with VRK1. Degraded by the proteasome, shielded by interaction with ATF7IP. In terms of processing, monoubiquitinated at Lys-884 by E2 enzymes UBE2E family. The conjugated-Ub is protected from deubiquitination through the SET domain. Monoubiquitination at Lys-884 is required for catalytic activity and H3K9 methylation and endogenous retrovirus silencing. Ubiquitously expressed. Strong expression in liver and testis. Expressed in the brain, lungs, kidneys, uterus and seminal vesicles.

Its subcellular location is the nucleus. It localises to the chromosome. The catalysed reaction is N(6),N(6)-dimethyl-L-lysyl(9)-[histone H3] + S-adenosyl-L-methionine = N(6),N(6),N(6)-trimethyl-L-lysyl(9)-[histone H3] + S-adenosyl-L-homocysteine + H(+). In terms of biological role, histone methyltransferase that specifically trimethylates 'Lys-9' of histone H3. H3 'Lys-9' trimethylation represents a specific tag for epigenetic transcriptional repression by recruiting HP1 (CBX1, CBX3 and/or CBX5) proteins to methylated histones. Mainly functions in euchromatin regions, thereby playing a central role in the silencing of euchromatic genes. H3 'Lys-9' trimethylation is coordinated with DNA methylation. Probably forms a complex with MBD1 and ATF7IP that represses transcription and couples DNA methylation and histone 'Lys-9' trimethylation. Its activity is dependent on MBD1 and is heritably maintained through DNA replication by being recruited by CAF-1. SETDB1 is targeted to histone H3 by TRIM28/TIF1B, a factor recruited by KRAB zinc-finger proteins. Probably forms a corepressor complex required for activated KRAS-mediated promoter hypermethylation and transcriptional silencing of tumor suppressor genes (TSGs) or other tumor-related genes in colorectal cancer (CRC) cells. Required to maintain a transcriptionally repressive state of genes in undifferentiated embryonic stem cells (ESCs). In ESCs, in collaboration with TRIM28, is also required for H3K9me3 and silencing of endogenous and introduced retroviruses in a DNA-methylation independent-pathway. Associates at promoter regions of tumor suppressor genes (TSGs) leading to their gene silencing. The SETDB1-TRIM28-ZNF274 complex may play a role in recruiting ATRX to the 3'-exons of zinc-finger coding genes with atypical chromatin signatures to establish or maintain/protect H3K9me3 at these transcriptionally active regions. The chain is Histone-lysine N-methyltransferase SETDB1 from Mus musculus (Mouse).